A 320-amino-acid polypeptide reads, in one-letter code: Malate dehydrogenase (320 aa).

NAD(+)-binding positions include G10 to G15 and D34. Residues R83 and R89 each contribute to the substrate site. Residues N96 and I119–N121 each bind NAD(+). 2 residues coordinate substrate: N121 and R152. The Proton acceptor role is filled by H176.

It belongs to the LDH/MDH superfamily. MDH type 3 family.

It carries out the reaction (S)-malate + NAD(+) = oxaloacetate + NADH + H(+). In terms of biological role, catalyzes the reversible oxidation of malate to oxaloacetate. This chain is Malate dehydrogenase, found in Roseobacter denitrificans (strain ATCC 33942 / OCh 114) (Erythrobacter sp. (strain OCh 114)).